Reading from the N-terminus, the 187-residue chain is Probable DNA endonuclease SmrA (187 aa).

The region spanning 88 to 169 is the Smr domain; it reads LNLLRQPVEE…GSGACYVALR (82 aa).

In terms of biological role, has DNA endonuclease activity. Binds DNA. This Escherichia coli (strain K12) protein is Probable DNA endonuclease SmrA (smrA).